Consider the following 311-residue polypeptide: HPr kinase/phosphorylase (311 aa).

Catalysis depends on residues histidine 139 and lysine 160. Position 154–161 (glycine 154–serine 161) interacts with ATP. Serine 161 provides a ligand contact to Mg(2+). Aspartate 178 (proton acceptor; for phosphorylation activity. Proton donor; for dephosphorylation activity) is an active-site residue. The segment at leucine 202 to aspartate 211 is important for the catalytic mechanism of both phosphorylation and dephosphorylation. Glutamate 203 contacts Mg(2+). Arginine 244 is a catalytic residue. An important for the catalytic mechanism of dephosphorylation region spans residues proline 265–arginine 270.

It belongs to the HPrK/P family. Homohexamer. It depends on Mg(2+) as a cofactor.

The catalysed reaction is [HPr protein]-L-serine + ATP = [HPr protein]-O-phospho-L-serine + ADP + H(+). The enzyme catalyses [HPr protein]-O-phospho-L-serine + phosphate + H(+) = [HPr protein]-L-serine + diphosphate. Functionally, catalyzes the ATP- as well as the pyrophosphate-dependent phosphorylation of a specific serine residue in HPr, a phosphocarrier protein of the phosphoenolpyruvate-dependent sugar phosphotransferase system (PTS). HprK/P also catalyzes the pyrophosphate-producing, inorganic phosphate-dependent dephosphorylation (phosphorolysis) of seryl-phosphorylated HPr (P-Ser-HPr). The two antagonistic activities of HprK/P are regulated by several intracellular metabolites, which change their concentration in response to the absence or presence of rapidly metabolisable carbon sources (glucose, fructose, etc.) in the growth medium. Therefore, by controlling the phosphorylation state of HPr, HPrK/P is a sensor enzyme that plays a major role in the regulation of carbon metabolism and sugar transport: it mediates carbon catabolite repression (CCR), and regulates PTS-catalyzed carbohydrate uptake and inducer exclusion. The chain is HPr kinase/phosphorylase from Levilactobacillus brevis (strain ATCC 367 / BCRC 12310 / CIP 105137 / JCM 1170 / LMG 11437 / NCIMB 947 / NCTC 947) (Lactobacillus brevis).